Reading from the N-terminus, the 318-residue chain is 2-keto-3-deoxygluconate permease (318 aa).

Helical transmembrane passes span 10-30 (LPGG…TLWP), 42-62 (GLIS…GATI), 82-102 (IAVA…GGIP), 109-129 (LSVL…YAAL), 139-159 (AGAV…LILG), 163-183 (LATF…LGFA), 201-221 (TLVP…TIVH), 224-244 (ASGV…LLLA), 257-277 (VAAS…AGMA), and 288-308 (TALV…LTAL).

The protein belongs to the KdgT transporter family.

It localises to the cell inner membrane. The enzyme catalyses 2-dehydro-3-deoxy-D-gluconate(in) + H(+)(in) = 2-dehydro-3-deoxy-D-gluconate(out) + H(+)(out). In terms of biological role, catalyzes the proton-dependent uptake of 2-keto-3-deoxygluconate (KDG) into the cell. This Xanthomonas oryzae pv. oryzae (strain MAFF 311018) protein is 2-keto-3-deoxygluconate permease.